Reading from the N-terminus, the 805-residue chain is MTDQAESSDSKNAKKDFSTAILERKKAANRLVVDEAVNDDNSVVALHPATMEKLQLFRGDTILIKGKKRKDTVVIALADETCDEPKIRMNKVVRSNLRVRLGDVVSVHQCPDVKYGKRVHILPIDDTIEGLTGDLFDAFLKPYFLEAYRPLRKGDNFLVRGGMRSVEFKVIETDPGEYCVVAPDTEIFCEGEPVKREDEERLDEVGYDDVGGVRKQMAQIRELVELPLRHPQLFKSIGVKPPKGILLYGPPGSGKTLIARAVANETGAFFFCINGPEIMSKLAGESESNLRKAFEEAEKNAPSIIFIDEIDSIAPKREKTHGEVERRIVSQLLTLMDGLKSRAHVIVMGATNRPNSIDPALRRFGRFDREIDIGVPDEVGRLEVLGIHTKNMKLAEEVDLERISKDTHGYVGADLAALCTEAALQCIREKMDVLDLEDDTIDAEVLNSMAVTNEHFQTALGTSNPSALRETVVEVPNVSWEDIGGLENVKRELQETVQYPVEPPEKFEKFGMSPSKGVLFYGPPGCGKTLLAKAIANECQANFISVKGPELLTMWFGESEANVREIFDKARQSAPCVLFFDELDSIATQRGSSSGDAGGAADRVLNQLLTEMDGMNAKKTVFIIGATNRPDIIDPALLRPGRLDQLIYIPLPDEDSRHQIFKACLRKSPLSKDIDLRALAKHTQGFSGADVTEICQRACKYAIRENIEKDIEREKRRQENPDSMDEDVDEVPEIKPAHFEESMKYARRSVSDADIRKYQAFAQTLQQSRGFGTEFRFADTSGGATAAADPFATSNAAADDDDLYS.

Residues 249 to 256 (GPPGSGKT) and 522 to 529 (GPPGCGKT) contribute to the ATP site. Residues 783–805 (GATAAADPFATSNAAADDDDLYS) are disordered.

Belongs to the AAA ATPase family.

Its function is as follows. Probably functions in cell division and growth processes. The protein is Cell division cycle protein 48 homolog (CAFP) of Capsicum annuum (Capsicum pepper).